The sequence spans 292 residues: UPF0696 protein C11orf68 homolog (292 aa).

Positions 1 to 10 are enriched in low complexity; the sequence is MAAAAAAVAG. The segment at 1 to 60 is disordered; the sequence is MAAAAAAVAGAGRGGGGGADPGQERSRARSWVGAERSEGRRMEPNEELEEEDSPGGREDG. A compositionally biased stretch (gly residues) spans 11–20; that stretch reads AGRGGGGGAD. Residues 35–44 show a composition bias toward basic and acidic residues; sequence ERSEGRRMEP.

It belongs to the UPF0696 family.

The sequence is that of UPF0696 protein C11orf68 homolog (Bles03) from Rattus norvegicus (Rat).